We begin with the raw amino-acid sequence, 1026 residues long: Multidrug resistance protein MdtC (1026 aa).

11 consecutive transmembrane segments (helical) span residues 15-35 (ILIAAAITLCGILGFRLLPVA), 333-353 (EVEETLAISVALVILVVFLFL), 360-380 (LIPAVAVPVSLIGTFAAMYLC), 387-407 (LSLMALTIATGFVVDDAIVVL), 431-451 (VGFTVISMSLSLVAVFLPLLL), 463-483 (FAVTLSVAIGISLVVSLTLTP), 528-548 (LVGVVFLGTVALNIWLYIAIP), 853-873 (LILIVAAIATVYIVLGILYES), 897-917 (LFNAPFSLIALIGIMLLIGIV), 953-973 (PIMMTTLAALFGALPLVLSGG), and 984-1004 (ITIVGGLVMSQLLTLYTTPVV).

It belongs to the resistance-nodulation-cell division (RND) (TC 2.A.6) family. MdtC subfamily. In terms of assembly, part of a tripartite efflux system composed of MdtA, MdtB and MdtC. MdtC forms a heteromultimer with MdtB.

It localises to the cell inner membrane. This Salmonella gallinarum (strain 287/91 / NCTC 13346) protein is Multidrug resistance protein MdtC.